Reading from the N-terminus, the 131-residue chain is Insertion element IS1 protein InsB (131 aa).

Belongs to the transposase 27 family.

Its function is as follows. Absolutely required for transposition of IS1. In Shigella flexneri, this protein is Insertion element IS1 protein InsB (insB1).